The sequence spans 138 residues: Large ribosomal subunit protein uL16 (138 aa).

Residues 1–16 (MLIPRRVKHRKQHHPG) are compositionally biased toward basic residues. The tract at residues 1–25 (MLIPRRVKHRKQHHPGRSGQATGGT) is disordered.

Belongs to the universal ribosomal protein uL16 family. As to quaternary structure, part of the 50S ribosomal subunit.

Its function is as follows. Binds 23S rRNA and is also seen to make contacts with the A and possibly P site tRNAs. This is Large ribosomal subunit protein uL16 from Renibacterium salmoninarum (strain ATCC 33209 / DSM 20767 / JCM 11484 / NBRC 15589 / NCIMB 2235).